We begin with the raw amino-acid sequence, 344 residues long: Isopentenyl-diphosphate delta-isomerase (344 aa).

Substrate is bound at residue Arg9–Lys10. Residues Ala65–Thr67, Ser95, and Asn124 contribute to the FMN site. Gln154 is a binding site for substrate. Glu155 is a binding site for Mg(2+). Residues Lys185, Thr215, Gly259–Arg261, and Ser280–Gly281 each bind FMN.

Belongs to the IPP isomerase type 2 family. In terms of assembly, homooctamer. Dimer of tetramers. FMN serves as cofactor. It depends on NADPH as a cofactor. Mg(2+) is required as a cofactor.

The protein localises to the cytoplasm. The catalysed reaction is isopentenyl diphosphate = dimethylallyl diphosphate. Functionally, involved in the biosynthesis of isoprenoids. Catalyzes the 1,3-allylic rearrangement of the homoallylic substrate isopentenyl (IPP) to its allylic isomer, dimethylallyl diphosphate (DMAPP). The protein is Isopentenyl-diphosphate delta-isomerase of Lacticaseibacillus paracasei (strain ATCC 334 / BCRC 17002 / CCUG 31169 / CIP 107868 / KCTC 3260 / NRRL B-441) (Lactobacillus paracasei).